The following is a 62-amino-acid chain: Chromatin protein Cren7 2 (62 aa).

Belongs to the Cren7 family. As to quaternary structure, monomer. In terms of processing, methylated at multiple sites, to varying extents.

The protein localises to the chromosome. Its subcellular location is the cytoplasm. A chromatin protein, binds double-stranded DNA without sequence specificity. Constrains negative DNA supercoils. This is Chromatin protein Cren7 2 (cren7-2) from Hyperthermus butylicus (strain DSM 5456 / JCM 9403 / PLM1-5).